We begin with the raw amino-acid sequence, 344 residues long: Ribosomal RNA large subunit methyltransferase Cfr (344 aa).

Glu90 (proton acceptor) is an active-site residue. In terms of domain architecture, Radical SAM core spans 97-330 (KQGWESFCIS…ATVRTQFGSE (234 aa)). Cys104 and Cys335 are joined by a disulfide. Positions 111, 115, and 118 each coordinate [4Fe-4S] cluster. Residues 157-158 (GE), Ser188, 211-213 (SLH), and Asn292 contribute to the S-adenosyl-L-methionine site. Cys335 functions as the S-methylcysteine intermediate in the catalytic mechanism.

This sequence belongs to the radical SAM superfamily. RlmN family. Cfr subfamily. Requires [4Fe-4S] cluster as cofactor.

The protein resides in the cytoplasm. The catalysed reaction is adenosine(2503) in 23S rRNA + 2 reduced [2Fe-2S]-[ferredoxin] + 2 S-adenosyl-L-methionine = 8-methyladenosine(2503) in 23S rRNA + 5'-deoxyadenosine + L-methionine + 2 oxidized [2Fe-2S]-[ferredoxin] + S-adenosyl-L-homocysteine. In terms of biological role, specifically methylates position 8 of adenine 2503 in 23S rRNA. Confers resistance to some classes of antibiotics. This Clostridium botulinum (strain Langeland / NCTC 10281 / Type F) protein is Ribosomal RNA large subunit methyltransferase Cfr.